The following is a 174-amino-acid chain: Zinc finger AN1 domain-containing stress-associated protein 15 (174 aa).

Residues Met-1–Ser-61 are disordered. Residues Pro-18 to Thr-41 show a composition bias toward low complexity. The segment covering Glu-42–Pro-54 has biased composition (pro residues). The AN1-type zinc finger occupies Val-109 to Gly-155. Residues Cys-115, Cys-118, Cys-129, Cys-131, Cys-136, His-139, His-145, and Cys-147 each contribute to the Zn(2+) site.

May be involved in environmental stress response. The polypeptide is Zinc finger AN1 domain-containing stress-associated protein 15 (SAP15) (Oryza sativa subsp. japonica (Rice)).